The primary structure comprises 329 residues: GTPase Obg (329 aa).

The Obg domain maps to 1-159 (MQFIDYAEIE…RWLRLELKLL (159 aa)). Residues 160–328 (AEVGIIGLPN…LLQIVWQLLD (169 aa)) enclose the OBG-type G domain. Residues 166 to 173 (GLPNAGKS), 191 to 195 (FTTLV), 213 to 216 (DIPG), 280 to 283 (NKMD), and 309 to 311 (SGV) contribute to the GTP site. 2 residues coordinate Mg(2+): serine 173 and threonine 193.

This sequence belongs to the TRAFAC class OBG-HflX-like GTPase superfamily. OBG GTPase family. In terms of assembly, monomer. Requires Mg(2+) as cofactor.

Its subcellular location is the cytoplasm. An essential GTPase which binds GTP, GDP and possibly (p)ppGpp with moderate affinity, with high nucleotide exchange rates and a fairly low GTP hydrolysis rate. Plays a role in control of the cell cycle, stress response, ribosome biogenesis and in those bacteria that undergo differentiation, in morphogenesis control. This Rippkaea orientalis (strain PCC 8801 / RF-1) (Cyanothece sp. (strain PCC 8801)) protein is GTPase Obg.